Consider the following 50-residue polypeptide: Large ribosomal subunit protein bL32 (50 aa).

Residues 1-26 (MAVPKRRVSHTRSAKRRTHYKITLKK) are compositionally biased toward basic residues. Positions 1-50 (MAVPKRRVSHTRSAKRRTHYKITLKKPVKDSDGSWKMPHMVNPNTGEYKN) are disordered.

This sequence belongs to the bacterial ribosomal protein bL32 family.

The chain is Large ribosomal subunit protein bL32 from Aliarcobacter butzleri (strain RM4018) (Arcobacter butzleri).